The primary structure comprises 336 residues: DNA-directed RNA polymerase subunit alpha (336 aa).

The alpha N-terminal domain (alpha-NTD) stretch occupies residues 1-226; it reads MLIAQRPTLS…ELFGLARELN (226 aa). Residues 243 to 336 are alpha C-terminal domain (alpha-CTD); that stretch reads LAADMALPIE…SDDAFGDDEL (94 aa).

Belongs to the RNA polymerase alpha chain family. As to quaternary structure, homodimer. The RNAP catalytic core consists of 2 alpha, 1 beta, 1 beta' and 1 omega subunit. When a sigma factor is associated with the core the holoenzyme is formed, which can initiate transcription.

It catalyses the reaction RNA(n) + a ribonucleoside 5'-triphosphate = RNA(n+1) + diphosphate. Its function is as follows. DNA-dependent RNA polymerase catalyzes the transcription of DNA into RNA using the four ribonucleoside triphosphates as substrates. This Renibacterium salmoninarum (strain ATCC 33209 / DSM 20767 / JCM 11484 / NBRC 15589 / NCIMB 2235) protein is DNA-directed RNA polymerase subunit alpha.